Consider the following 227-residue polypeptide: Ribosomal RNA small subunit methyltransferase G (227 aa).

Residues glycine 69, phenylalanine 74, 119-120 (VE), and arginine 134 each bind S-adenosyl-L-methionine.

The protein belongs to the methyltransferase superfamily. RNA methyltransferase RsmG family.

Its subcellular location is the cytoplasm. Its function is as follows. Specifically methylates the N7 position of a guanine in 16S rRNA. In Mycoplasmopsis pulmonis (strain UAB CTIP) (Mycoplasma pulmonis), this protein is Ribosomal RNA small subunit methyltransferase G.